Here is a 625-residue protein sequence, read N- to C-terminus: Protein LEO1 homolog (625 aa).

2 disordered regions span residues 1–214 and 415–625; these read MVKG…DMVL and EREK…SDED. Acidic residues-rich tracts occupy residues 40-55 and 63-80; these read DEAE…GEAE and EAES…PGES. 3 stretches are compositionally biased toward basic and acidic residues: residues 97 to 113, 121 to 137, and 182 to 197; these read SEAR…EHGG, QEVV…KHYE, and EYVR…RSPI. Phosphoserine is present on S203. The segment covering 415–425 has biased composition (basic and acidic residues); sequence EREKEKREKAE. The stretch at 415 to 539 forms a coiled coil; sequence EREKEKREKA…ETEEEEEEKS (125 aa). Positions 426 to 436 are enriched in polar residues; that stretch reads SQNLKASTKLS. Over residues 471-491 the composition is skewed to basic and acidic residues; the sequence is YRSNRGYEEDLEAEAQRERRI. The span at 492-501 shows a compositional bias: basic residues; sequence LNAKKSHKGI. Positions 523-537 are enriched in acidic residues; that stretch reads EREESEYETEEEEEE. Positions 538–547 are enriched in basic and acidic residues; the sequence is KSPARGRGKD. A phosphoserine mark is found at S548, S570, S600, S605, and S622. A compositionally biased stretch (acidic residues) spans 548–561; the sequence is SEDEYEEDAEEDEE.

This sequence belongs to the LEO1 family. Component of the nuclear PAF1 complex (PAF1C), which consists of VIP2/ELF7/PAF1, VIP3/SKI8/WDR61, VIP4/LEO1, VIP5/RTF1, VIP6/ELF8/CTR9 and CDC73. Interacts with VIP3 and VIP6. Expressed in roots, shoot apices, stems, cauline leaves, inflorescence apices and flowers.

Its subcellular location is the nucleus. Its function is as follows. Component of the PAF1 complex (PAF1C) which is involved in histone modifications such as methylation on histone H3 'Lys-4' (H3K4me3). Involved in regulation of flowering time. Required for the expression of the flowering repressor and MADS box gene FLC. Involved in the control of seed dormancy and germination. The protein is Protein LEO1 homolog of Arabidopsis thaliana (Mouse-ear cress).